Reading from the N-terminus, the 441-residue chain is G-protein coupled receptor family C group 5 member C (441 aa).

The N-terminal stretch at 1–23 is a signal peptide; sequence MAIHKALVMCLGLPLFLFPGAWA. Residues 24–50 are Extracellular-facing; sequence QGHVPPGCSQGLNPLYYNLCDRSGAWG. The chain crosses the membrane as a helical span at residues 51–71; it reads IVLEAVAGAGIVTTFVLTIIL. At 72-85 the chain is on the cytoplasmic side; that stretch reads VASLPFVQDTKKRS. Residues 86–106 traverse the membrane as a helical segment; the sequence is LLGTQVFFLLGTLGLFCLVFA. Topologically, residues 107–120 are extracellular; the sequence is CVVKPDFSTCASRR. The helical transmembrane segment at 121–141 threads the bilayer; sequence FLFGVLFAICFSCLAAHVFAL. The Cytoplasmic portion of the chain corresponds to 142–155; sequence NFLARKNHGPRGWV. Residues 156-176 form a helical membrane-spanning segment; sequence IFTVALLLTLVEVIINTEWLI. Topologically, residues 177 to 208 are extracellular; the sequence is ITLVRGSGEGGPQGNSSAGWAVASPCAIANMD. Residue Asn-191 is glycosylated (N-linked (GlcNAc...) asparagine). The helical transmembrane segment at 209-229 threads the bilayer; it reads FVMALIYVMLLLLGAFLGAWP. The Cytoplasmic portion of the chain corresponds to 230–241; sequence ALCGRYKRWRKH. Residues 242-262 form a helical membrane-spanning segment; it reads GVFVLLTTATSVAIWVVWIVM. Topologically, residues 263–279 are extracellular; the sequence is YTYGNKQHNSPTWDDPT. The helical transmembrane segment at 280–300 threads the bilayer; it reads LAIALAANAWAFVLFYVIPEV. The Cytoplasmic portion of the chain corresponds to 301 to 441; the sequence is SQVTKSSPEQ…QVFRNPYVWD (141 aa). Ser-344, Ser-383, Ser-403, and Ser-406 each carry phosphoserine. Residues 412 to 441 are disordered; it reads DMYSAQSHQAATPPKDGKNSQVFRNPYVWD. The residue at position 414 (Tyr-414) is a Phosphotyrosine. At Thr-423 the chain carries Phosphothreonine.

It belongs to the G-protein coupled receptor 3 family. In terms of tissue distribution, expression is highest in the periphery, particularly in the stomach, but also in the kidney, liver, pancreas, and prostate. In brain, levels of expression are generally lower than in the periphery, with the exception of cerebellum, spinal cord, and dorsal root ganglia (DRG).

The protein resides in the cell membrane. It localises to the cytoplasmic vesicle membrane. In terms of biological role, this retinoic acid-inducible G-protein coupled receptor provide evidence for a possible interaction between retinoid and G-protein signaling pathways. The sequence is that of G-protein coupled receptor family C group 5 member C (GPRC5C) from Homo sapiens (Human).